The chain runs to 469 residues: UDP-N-acetylmuramate--L-alanine ligase (469 aa).

Residue 112 to 118 (GTHGKTT) coordinates ATP.

The protein belongs to the MurCDEF family.

It localises to the cytoplasm. The catalysed reaction is UDP-N-acetyl-alpha-D-muramate + L-alanine + ATP = UDP-N-acetyl-alpha-D-muramoyl-L-alanine + ADP + phosphate + H(+). The protein operates within cell wall biogenesis; peptidoglycan biosynthesis. Its function is as follows. Cell wall formation. The polypeptide is UDP-N-acetylmuramate--L-alanine ligase (Methylibium petroleiphilum (strain ATCC BAA-1232 / LMG 22953 / PM1)).